We begin with the raw amino-acid sequence, 337 residues long: Ketol-acid reductoisomerase (NADP(+)) (337 aa).

One can recognise a KARI N-terminal Rossmann domain in the interval 3–183 (VEMFYDDDAD…GGTRAGVIKT (181 aa)). NADP(+) contacts are provided by residues 26–29 (YGSQ), Lys-49, Ser-52, Ser-54, and 84–87 (DTAQ). His-109 is an active-site residue. Gly-135 provides a ligand contact to NADP(+). Positions 184 to 329 (TFKEETETDL…KKLRDLMSWV (146 aa)) constitute a KARI C-terminal knotted domain. Positions 192, 196, 228, and 232 each coordinate Mg(2+). Ser-253 contributes to the substrate binding site.

This sequence belongs to the ketol-acid reductoisomerase family. It depends on Mg(2+) as a cofactor.

The enzyme catalyses (2R)-2,3-dihydroxy-3-methylbutanoate + NADP(+) = (2S)-2-acetolactate + NADPH + H(+). It carries out the reaction (2R,3R)-2,3-dihydroxy-3-methylpentanoate + NADP(+) = (S)-2-ethyl-2-hydroxy-3-oxobutanoate + NADPH + H(+). It participates in amino-acid biosynthesis; L-isoleucine biosynthesis; L-isoleucine from 2-oxobutanoate: step 2/4. It functions in the pathway amino-acid biosynthesis; L-valine biosynthesis; L-valine from pyruvate: step 2/4. Functionally, involved in the biosynthesis of branched-chain amino acids (BCAA). Catalyzes an alkyl-migration followed by a ketol-acid reduction of (S)-2-acetolactate (S2AL) to yield (R)-2,3-dihydroxy-isovalerate. In the isomerase reaction, S2AL is rearranged via a Mg-dependent methyl migration to produce 3-hydroxy-3-methyl-2-ketobutyrate (HMKB). In the reductase reaction, this 2-ketoacid undergoes a metal-dependent reduction by NADPH to yield (R)-2,3-dihydroxy-isovalerate. The sequence is that of Ketol-acid reductoisomerase (NADP(+)) from Rhodococcus jostii (strain RHA1).